Reading from the N-terminus, the 438-residue chain is sn-glycerol-3-phosphate-binding periplasmic protein UgpB (438 aa).

The first 23 residues, 1-23 (MKPLHYTASALALGLALMGNAQA), serve as a signal peptide directing secretion. Sn-glycerol 3-phosphate is bound by residues Tyr-65, Glu-89, Ser-144, Ser-270, Gly-307, Tyr-346, and Arg-397.

Belongs to the bacterial solute-binding protein 1 family. In terms of assembly, the complex is composed of two ATP-binding proteins (UgpC), two transmembrane proteins (UgpA and UgpE) and a solute-binding protein (UgpB).

Its subcellular location is the periplasm. Part of the ABC transporter complex UgpBAEC involved in sn-glycerol-3-phosphate (G3P) import. Binds G3P. The sequence is that of sn-glycerol-3-phosphate-binding periplasmic protein UgpB (ugpB) from Shigella flexneri.